Consider the following 309-residue polypeptide: Mitochondrial import receptor subunit TOM34 (309 aa).

Residue Ser8 is modified to Phosphoserine. TPR repeat units follow at residues 9–42, 51–84, and 86–118; these read VEEL…LQAQ, SVLY…VPFS, and KPLL…DDNV. Ser160 carries the phosphoserine modification. A disordered region spans residues 161–189; that stretch reads LPSENHKEMAKSKSKETTATKNRVPSAGD. The span at 164 to 178 shows a compositional bias: basic and acidic residues; sequence ENHKEMAKSKSKETT. Ser186 bears the Phosphoserine mark. TPR repeat units follow at residues 193–226, 227–260, and 262–294; these read ARVL…SNLE, SATY…DGKN, and KAFY…EPRN. A Glycyl lysine isopeptide (Lys-Gly) (interchain with G-Cter in SUMO2) cross-link involves residue Lys197.

The protein belongs to the Tom34 family. As to quaternary structure, interacts with HSP90A, VCP, ATP6V1D, KIAA0665, AMPK, and DMAP1 through its TPR repeat. Ubiquitous.

Its subcellular location is the cytoplasm. The protein resides in the mitochondrion outer membrane. Plays a role in the import of cytosolically synthesized preproteins into mitochondria. Binds the mature portion of precursor proteins. Interacts with cellular components, and possesses weak ATPase activity. May be a chaperone-like protein that helps to keep newly synthesized precursors in an unfolded import compatible state. This chain is Mitochondrial import receptor subunit TOM34 (TOMM34), found in Homo sapiens (Human).